Consider the following 372-residue polypeptide: Mevalonate 3,5-bisphosphate decarboxylase (372 aa).

It belongs to the mevalonate 3,5-bisphosphate decarboxylase family. As to quaternary structure, homodimer.

The enzyme catalyses (R)-3,5-bisphosphomevalonate + H(+) = isopentenyl phosphate + phosphate + CO2. The protein operates within isoprenoid biosynthesis; isopentenyl diphosphate biosynthesis via mevalonate pathway. Functionally, catalyzes the ATP-independent decarboxylation of (R)-mevalonate 3,5-bisphosphate to isopentenyl phosphate. Functions in an alternative mevalonate pathway, only present in extreme acidophiles of the Thermoplasmatales order, which passes through mevalonate 3-phosphate rather than mevalonate 5-phosphate. The sequence is that of Mevalonate 3,5-bisphosphate decarboxylase from Thermoplasma volcanium (strain ATCC 51530 / DSM 4299 / JCM 9571 / NBRC 15438 / GSS1).